The sequence spans 255 residues: MLVMAGLGLYDERDVTLKTLDFAKKVDKIYAEFYTAILTGTTMEKVEETLQKPITVLNREKVEYETNKLIEEAKNKDIMFLTAGDPMVATTHVDIAVEARKKGIEVVIINAPSIYSAIGITGLQLYKFGKTTSVVFPEPNYFPETPYDVIKDNLKLGYHTLCLLDIQADKERFMTANEGLDTLLKIEEKRNEKVISGETYAAVVARAGSTKPGLYYGKIKDLINYDFKSPLHCVIIPGKLHFMEEDALKYLFENI.

S-adenosyl-L-methionine-binding positions include L9, D85, V88, 113–114 (SI), L164, A207, and H232.

This sequence belongs to the diphthine synthase family. Homodimer.

The enzyme catalyses 2-[(3S)-amino-3-carboxypropyl]-L-histidyl-[translation elongation factor 2] + 3 S-adenosyl-L-methionine = diphthine-[translation elongation factor 2] + 3 S-adenosyl-L-homocysteine + 3 H(+). It functions in the pathway protein modification; peptidyl-diphthamide biosynthesis. In terms of biological role, S-adenosyl-L-methionine-dependent methyltransferase that catalyzes the trimethylation of the amino group of the modified target histidine residue in translation elongation factor 2 (EF-2), to form an intermediate called diphthine. The three successive methylation reactions represent the second step of diphthamide biosynthesis. The protein is Diphthine synthase of Methanococcus maripaludis (strain C6 / ATCC BAA-1332).